The sequence spans 217 residues: Small ribosomal subunit protein uS3 (217 aa).

The region spanning Ile40–Arg110 is the KH type-2 domain.

This sequence belongs to the universal ribosomal protein uS3 family. Part of the 30S ribosomal subunit. Forms a tight complex with proteins S10 and S14.

Its function is as follows. Binds the lower part of the 30S subunit head. Binds mRNA in the 70S ribosome, positioning it for translation. The chain is Small ribosomal subunit protein uS3 from Rickettsia prowazekii (strain Madrid E).